We begin with the raw amino-acid sequence, 144 residues long: D-aminoacyl-tRNA deacylase (144 aa).

A Gly-cisPro motif, important for rejection of L-amino acids motif is present at residues 136–137; sequence GP.

Belongs to the DTD family. Homodimer.

It is found in the cytoplasm. It carries out the reaction glycyl-tRNA(Ala) + H2O = tRNA(Ala) + glycine + H(+). The catalysed reaction is a D-aminoacyl-tRNA + H2O = a tRNA + a D-alpha-amino acid + H(+). In terms of biological role, an aminoacyl-tRNA editing enzyme that deacylates mischarged D-aminoacyl-tRNAs. Also deacylates mischarged glycyl-tRNA(Ala), protecting cells against glycine mischarging by AlaRS. Acts via tRNA-based rather than protein-based catalysis; rejects L-amino acids rather than detecting D-amino acids in the active site. By recycling D-aminoacyl-tRNA to D-amino acids and free tRNA molecules, this enzyme counteracts the toxicity associated with the formation of D-aminoacyl-tRNA entities in vivo and helps enforce protein L-homochirality. The sequence is that of D-aminoacyl-tRNA deacylase from Haemophilus influenzae (strain PittGG).